A 420-amino-acid polypeptide reads, in one-letter code: UDP-N-acetylglucosamine 1-carboxyvinyltransferase (420 aa).

A phosphoenolpyruvate-binding site is contributed by 22–23 (KN). R93 is a binding site for UDP-N-acetyl-alpha-D-glucosamine. Residue C117 is the Proton donor of the active site. C117 is modified (2-(S-cysteinyl)pyruvic acid O-phosphothioketal). UDP-N-acetyl-alpha-D-glucosamine contacts are provided by residues 122-126 (RPVDL), D307, and V329.

Belongs to the EPSP synthase family. MurA subfamily.

The protein resides in the cytoplasm. The enzyme catalyses phosphoenolpyruvate + UDP-N-acetyl-alpha-D-glucosamine = UDP-N-acetyl-3-O-(1-carboxyvinyl)-alpha-D-glucosamine + phosphate. It participates in cell wall biogenesis; peptidoglycan biosynthesis. In terms of biological role, cell wall formation. Adds enolpyruvyl to UDP-N-acetylglucosamine. The polypeptide is UDP-N-acetylglucosamine 1-carboxyvinyltransferase (Hahella chejuensis (strain KCTC 2396)).